The sequence spans 430 residues: MYYALVGYGVSNKALCEKLISMGHKIFVSELRKFTDEEKEWFSKKGIDFEEGKNSDRICEADRIVVSPSVRFDHPALAKCRGKTFSDIEVVLDMNKPNFVIAVTGSNGKTTSCKLLSFVFQKLGLDSYACGNIGTPAADVLGFKTKYLVLEISSFQLFWSKMLHIDIGVVLNIQPNHLDWHPSLEHYAKSKLKLLEFSKTGIYNCSDQNIMKFISEKSNLCAFDPLKIRKVDDGIVYEGKYYTFKNDFLKTHQNLQNLSAILKIFSVMNFDLKQVLEILEDFKPLKHRMEFVDEINGVVFLNDSKATSSAATISALENFNSRNVILLLAGRGKNEDYADLIAQIKRKAKHVIVFGEMVELLRDELKLSDIPYTISENMQNAVLKAFEISEKGDVVLLSPAGASFDMYRNYQERGEHFINMVKLLRGKLLE.

105-111 (GSNGKTT) contributes to the ATP binding site.

It belongs to the MurCDEF family.

The protein localises to the cytoplasm. The catalysed reaction is UDP-N-acetyl-alpha-D-muramoyl-L-alanine + D-glutamate + ATP = UDP-N-acetyl-alpha-D-muramoyl-L-alanyl-D-glutamate + ADP + phosphate + H(+). It participates in cell wall biogenesis; peptidoglycan biosynthesis. Functionally, cell wall formation. Catalyzes the addition of glutamate to the nucleotide precursor UDP-N-acetylmuramoyl-L-alanine (UMA). The polypeptide is UDP-N-acetylmuramoylalanine--D-glutamate ligase (Pseudothermotoga lettingae (strain ATCC BAA-301 / DSM 14385 / NBRC 107922 / TMO) (Thermotoga lettingae)).